An 849-amino-acid polypeptide reads, in one-letter code: Envelope glycoprotein gp160 (849 aa).

Positions 1 to 31 (MRVKGIQRNWQHLWKWGTLILGLVIICSASD) are cleaved as a signal peptide. The Extracellular segment spans residues 32–670 (NLWVTVYYGV…ISNWLWYIRI (639 aa)). An intrachain disulfide couples cysteine 53 to cysteine 73. N-linked (GlcNAc...) asparagine; by host glycans are attached at residues asparagine 87, asparagine 129, asparagine 137, asparagine 142, asparagine 153, asparagine 185, asparagine 195, asparagine 232, asparagine 239, asparagine 260, asparagine 274, asparagine 287, asparagine 299, asparagine 329, asparagine 341, asparagine 354, and asparagine 358. 5 cysteine pairs are disulfide-bonded: cysteine 118–cysteine 203, cysteine 125–cysteine 194, cysteine 130–cysteine 154, cysteine 216–cysteine 245, and cysteine 226–cysteine 237. Positions 130-153 (CTNVNSANHTEANNTVENKEEIKN) are V1. Residues 154–194 (CSFKITTERGGKKKEEYALFYKLDVVPISNGNKTSYRLIHC) form a V2 region. The segment at 294–327 (CIRPNNNTRKSIPIGPGQAFYATGDIIGDIRQAH) is V3. Cysteine 294 and cysteine 328 are joined by a disulfide. Residues 360–370 (SAGGDLEITTH) form a CD4-binding loop region. 2 cysteine pairs are disulfide-bonded: cysteine 374–cysteine 430 and cysteine 381–cysteine 403. The segment at 381–403 (CNTSGLFNNNISNINNETITLPC) is V4. Asparagine 382, asparagine 390, asparagine 396, asparagine 433, and asparagine 447 each carry an N-linked (GlcNAc...) asparagine; by host glycan. 2 V5 regions span residues 446–457 (NNDSTEETFRPG) and 448–457 (DSTEETFRPG). Residues 498 to 518 (AVGLGAVFLGFLGAAGSTMGA) form a fusion peptide region. An immunosuppression region spans residues 560-578 (KQLQSRVLAIERYLKDQQL). Cysteine 584 and cysteine 590 form a disulfide bridge. Asparagine 597, asparagine 602, asparagine 611, and asparagine 623 each carry an N-linked (GlcNAc...) asparagine; by host glycan. Residues 619 to 653 (REIHNYTQHIYSLIEESQNQQEKNEQDLLALDKWA) are a coiled coil. Residues 648–669 (ALDKWASLWNWFDISNWLWYIR) are MPER; binding to GalCer. A helical transmembrane segment spans residues 671–691 (FIMIVGGLIGLRIVFAVLSIV). The Cytoplasmic segment spans residues 692–849 (NRVRQGYSPL…IRQGLERALL (158 aa)). Positions 698 to 701 (YSPL) match the YXXL motif; contains endocytosis signal motif. The segment at 709–729 (HQREPDRLGKTEEGGGEQDRD) is disordered. Cysteine 750 carries S-palmitoyl cysteine; by host lipidation. Residues 848–849 (LL) carry the Di-leucine internalization motif motif.

Belongs to the HIV-1 env protein family. As to quaternary structure, the mature envelope protein (Env) consists of a homotrimer of non-covalently associated gp120-gp41 heterodimers. The resulting complex protrudes from the virus surface as a spike. There seems to be as few as 10 spikes on the average virion. Interacts with host CD4, CCR5 and CXCR4. Gp120 also interacts with the C-type lectins CD209/DC-SIGN and CLEC4M/DC-SIGNR (collectively referred to as DC-SIGN(R)). Gp120 and gp41 interact with GalCer. Gp120 interacts with host ITGA4/ITGB7 complex; on CD4+ T-cells, this interaction results in rapid activation of integrin ITGAL/LFA-1, which facilitates efficient cell-to-cell spreading of HIV-1. Gp120 interacts with cell-associated heparan sulfate; this interaction increases virus infectivity on permissive cells and may be involved in infection of CD4- cells. The mature envelope protein (Env) consists of a homotrimer of non-covalently associated gp120-gp41 heterodimers. The resulting complex protrudes from the virus surface as a spike. There seems to be as few as 10 spikes on the average virion. In terms of processing, highly glycosylated by host. The high number of glycan on the protein is reffered to as 'glycan shield' because it contributes to hide protein sequence from adaptive immune system. Post-translationally, palmitoylation of the transmembrane protein and of Env polyprotein (prior to its proteolytic cleavage) is essential for their association with host cell membrane lipid rafts. Palmitoylation is therefore required for envelope trafficking to classical lipid rafts, but not for viral replication. Specific enzymatic cleavages in vivo yield mature proteins. Envelope glycoproteins are synthesized as an inactive precursor that is heavily N-glycosylated and processed likely by host cell furin in the Golgi to yield the mature SU and TM proteins. The cleavage site between SU and TM requires the minimal sequence [KR]-X-[KR]-R. About 2 of the 9 disulfide bonds of gp41 are reduced by P4HB/PDI, following binding to CD4 receptor.

It is found in the virion membrane. It localises to the host cell membrane. The protein localises to the host endosome membrane. Functionally, oligomerizes in the host endoplasmic reticulum into predominantly trimers. In a second time, gp160 transits in the host Golgi, where glycosylation is completed. The precursor is then proteolytically cleaved in the trans-Golgi and thereby activated by cellular furin or furin-like proteases to produce gp120 and gp41. Attaches the virus to the host lymphoid cell by binding to the primary receptor CD4. This interaction induces a structural rearrangement creating a high affinity binding site for a chemokine coreceptor like CXCR4 and/or CCR5. Acts as a ligand for CD209/DC-SIGN and CLEC4M/DC-SIGNR, which are respectively found on dendritic cells (DCs), and on endothelial cells of liver sinusoids and lymph node sinuses. These interactions allow capture of viral particles at mucosal surfaces by these cells and subsequent transmission to permissive cells. HIV subverts the migration properties of dendritic cells to gain access to CD4+ T-cells in lymph nodes. Virus transmission to permissive T-cells occurs either in trans (without DCs infection, through viral capture and transmission), or in cis (following DCs productive infection, through the usual CD4-gp120 interaction), thereby inducing a robust infection. In trans infection, bound virions remain infectious over days and it is proposed that they are not degraded, but protected in non-lysosomal acidic organelles within the DCs close to the cell membrane thus contributing to the viral infectious potential during DCs' migration from the periphery to the lymphoid tissues. On arrival at lymphoid tissues, intact virions recycle back to DCs' cell surface allowing virus transmission to CD4+ T-cells. Its function is as follows. Acts as a class I viral fusion protein. Under the current model, the protein has at least 3 conformational states: pre-fusion native state, pre-hairpin intermediate state, and post-fusion hairpin state. During fusion of viral and target intracellular membranes, the coiled coil regions (heptad repeats) assume a trimer-of-hairpins structure, positioning the fusion peptide in close proximity to the C-terminal region of the ectodomain. The formation of this structure appears to drive apposition and subsequent fusion of viral and target cell membranes. Complete fusion occurs in host cell endosomes and is dynamin-dependent, however some lipid transfer might occur at the plasma membrane. The virus undergoes clathrin-dependent internalization long before endosomal fusion, thus minimizing the surface exposure of conserved viral epitopes during fusion and reducing the efficacy of inhibitors targeting these epitopes. Membranes fusion leads to delivery of the nucleocapsid into the cytoplasm. This is Envelope glycoprotein gp160 from Human immunodeficiency virus type 1 group M subtype G (isolate 92NG083) (HIV-1).